We begin with the raw amino-acid sequence, 96 residues long: Protein RnfH (96 aa).

The protein belongs to the UPF0125 (RnfH) family.

The chain is Protein RnfH from Klebsiella pneumoniae (strain 342).